Here is a 361-residue protein sequence, read N- to C-terminus: Histidinol-phosphate aminotransferase (361 aa).

An N6-(pyridoxal phosphate)lysine modification is found at lysine 219.

The protein belongs to the class-II pyridoxal-phosphate-dependent aminotransferase family. Histidinol-phosphate aminotransferase subfamily. In terms of assembly, homodimer. It depends on pyridoxal 5'-phosphate as a cofactor.

The enzyme catalyses L-histidinol phosphate + 2-oxoglutarate = 3-(imidazol-4-yl)-2-oxopropyl phosphate + L-glutamate. Its pathway is amino-acid biosynthesis; L-histidine biosynthesis; L-histidine from 5-phospho-alpha-D-ribose 1-diphosphate: step 7/9. This chain is Histidinol-phosphate aminotransferase, found in Acinetobacter baumannii (strain SDF).